The following is a 478-amino-acid chain: Putative L-amino-acid oxidase YobN (478 aa).

Residues Ser34, Glu53, Arg61, and 80-81 (MR) each bind FAD. Positions 81 and 369 each coordinate substrate. FAD-binding positions include Glu451 and 460–463 (MQGA).

Belongs to the flavin monoamine oxidase family. FIG1 subfamily. The cofactor is FAD.

The enzyme catalyses an L-alpha-amino acid + O2 + H2O = a 2-oxocarboxylate + H2O2 + NH4(+). In Bacillus subtilis (strain 168), this protein is Putative L-amino-acid oxidase YobN (yobN).